Here is a 473-residue protein sequence, read N- to C-terminus: MKTLYSLRRFYPVETLFNGTLALAGRDQETTGFAWWAGNARLINLSGKLLGAHVAHAGLIVFWAGAMNLFEVAHFVPEKPMYEQGLILLPHLATLGWGVGPGGEVIDTFPYFVSGVLHLISSAVLGFGGIYHALLGPETLEESFPFFGYVWKDRNKMTTILGIHLILLGIGAFLLVFKALYFGGVYDTWAPGGGDVRKITNLTLSPSVIFGYLLKSPFGGEGWIVSVDDLEDIVGGHVWLGSICILGGIWHILTKPFAWARRALVWSGEAYLSYSLGALSVFGFIACCFVWFNNTAYPSEFYGPTGPEASQAQAFTFLVRDQRLGANIGSAQGPTGLGKYLMRSPTGEVIFGGETMRFWDLRAPWLEPLRGPNGLDLSRLKKDIQPWQERRSAEYMTHAPLGSLNSVGGVATEINAVNYVSPRSWLATSHFVLGFFLFVGHLWHAGRARAAAAGFEKGIDRDFEPVLFMTPLN.

Positions Met-1–Glu-14 are excised as a propeptide. Thr-15 carries the post-translational modification N-acetylthreonine. Thr-15 is subject to Phosphothreonine. A run of 5 helical transmembrane segments spans residues Leu-69–Ala-93, Leu-134–Asn-155, Lys-178–Thr-200, Lys-255–Ser-275, and Trp-291–Ala-312. Glu-367 is a binding site for [CaMn4O5] cluster. A helical transmembrane segment spans residues Arg-447–Pro-471.

This sequence belongs to the PsbB/PsbC family. PsbC subfamily. As to quaternary structure, PSII is composed of 1 copy each of membrane proteins PsbA, PsbB, PsbC, PsbD, PsbE, PsbF, PsbH, PsbI, PsbJ, PsbK, PsbL, PsbM, PsbT, PsbX, PsbY, PsbZ, Psb30/Ycf12, at least 3 peripheral proteins of the oxygen-evolving complex and a large number of cofactors. It forms dimeric complexes. Binds multiple chlorophylls and provides some of the ligands for the Ca-4Mn-5O cluster of the oxygen-evolving complex. It may also provide a ligand for a Cl- that is required for oxygen evolution. PSII binds additional chlorophylls, carotenoids and specific lipids. is required as a cofactor.

It localises to the plastid. The protein resides in the chloroplast thylakoid membrane. In terms of biological role, one of the components of the core complex of photosystem II (PSII). It binds chlorophyll and helps catalyze the primary light-induced photochemical processes of PSII. PSII is a light-driven water:plastoquinone oxidoreductase, using light energy to abstract electrons from H(2)O, generating O(2) and a proton gradient subsequently used for ATP formation. The polypeptide is Photosystem II CP43 reaction center protein (Cucumis sativus (Cucumber)).